A 399-amino-acid chain; its full sequence is S-adenosylmethionine synthase (399 aa).

Residue His17 coordinates ATP. Asp19 lines the Mg(2+) pocket. Glu45 contributes to the K(+) binding site. Glu58 and Gln101 together coordinate L-methionine. A flexible loop region spans residues 101–111; that stretch reads QSADIAMGVDQ. ATP contacts are provided by residues 177–179, 244–245, Asp253, 259–260, Ala276, and Lys280; these read DGK, RF, and RK. Asp253 serves as a coordination point for L-methionine. An L-methionine-binding site is contributed by Lys284.

The protein belongs to the AdoMet synthase family. Homotetramer; dimer of dimers. Mg(2+) serves as cofactor. K(+) is required as a cofactor.

Its subcellular location is the cytoplasm. The catalysed reaction is L-methionine + ATP + H2O = S-adenosyl-L-methionine + phosphate + diphosphate. It participates in amino-acid biosynthesis; S-adenosyl-L-methionine biosynthesis; S-adenosyl-L-methionine from L-methionine: step 1/1. Catalyzes the formation of S-adenosylmethionine (AdoMet) from methionine and ATP. The overall synthetic reaction is composed of two sequential steps, AdoMet formation and the subsequent tripolyphosphate hydrolysis which occurs prior to release of AdoMet from the enzyme. The polypeptide is S-adenosylmethionine synthase (Bacillus anthracis (strain A0248)).